Consider the following 415-residue polypeptide: Serine hydroxymethyltransferase (415 aa).

Residues leucine 117 and 121–123 (GHL) contribute to the (6S)-5,6,7,8-tetrahydrofolate site. Lysine 226 is subject to N6-(pyridoxal phosphate)lysine. (6S)-5,6,7,8-tetrahydrofolate is bound by residues glutamate 241 and 349 to 351 (SPF).

Belongs to the SHMT family. As to quaternary structure, homodimer. Requires pyridoxal 5'-phosphate as cofactor.

The protein resides in the cytoplasm. The catalysed reaction is (6R)-5,10-methylene-5,6,7,8-tetrahydrofolate + glycine + H2O = (6S)-5,6,7,8-tetrahydrofolate + L-serine. The protein operates within one-carbon metabolism; tetrahydrofolate interconversion. Its pathway is amino-acid biosynthesis; glycine biosynthesis; glycine from L-serine: step 1/1. Its function is as follows. Catalyzes the reversible interconversion of serine and glycine with tetrahydrofolate (THF) serving as the one-carbon carrier. This reaction serves as the major source of one-carbon groups required for the biosynthesis of purines, thymidylate, methionine, and other important biomolecules. Also exhibits THF-independent aldolase activity toward beta-hydroxyamino acids, producing glycine and aldehydes, via a retro-aldol mechanism. The chain is Serine hydroxymethyltransferase from Geotalea uraniireducens (strain Rf4) (Geobacter uraniireducens).